We begin with the raw amino-acid sequence, 500 residues long: Zinc finger protein 689 (500 aa).

Residues 1–24 (MAPPSAPLLEQAPGEVGPTRRRGR) are disordered. The KRAB domain occupies 29 to 100 (LKFADVAVYF…AALDPQEYRR (72 aa)). Residues 110–144 (TRQKNEEKEVFPPKDVPRKGKRGRKPSKPRLIARQ) are disordered. Residues 112–127 (QKNEEKEVFPPKDVPR) show a composition bias toward basic and acidic residues. A compositionally biased stretch (basic residues) spans 128–137 (KGKRGRKPSK). The segment at 149 to 171 (PICPDCGCTFPDLPALESHKCAQ) adopts a C2H2-type 1; degenerate zinc-finger fold. 10 C2H2-type zinc fingers span residues 177-199 (YPCPDCGRRFSYPSLLVSHRRAH), 205-227 (YVCDQCGKRFSQRKNLSQHQVIH), 233-255 (YHCPDCGRCFRRSRSLANHRTTH), 261-283 (HQCPSCGRRFAYPSLLAIHQRTH), 289-311 (YTCLECSRRFRQRTALVIHQRIH), 317-339 (YPCPDCERRFSSSSRLVSHRRVH), 345-367 (YACEHCEARFSQRSTLLQHQLLH), 373-395 (YPCPDCGRAFRRSGSLAIHRSTH), 401-423 (HACDDCGRRFAYPSLLASHRRVH), and 429-451 (YACDLCSKRFAQWSHLAQHQLLH). K455 participates in a covalent cross-link: Glycyl lysine isopeptide (Lys-Gly) (interchain with G-Cter in SUMO2). The segment at 457 to 482 (FPCLECGRCFRQRWSLAVHKCCPNTH) adopts a C2H2-type 12 zinc-finger fold.

Belongs to the krueppel C2H2-type zinc-finger protein family.

Its subcellular location is the nucleus. Its function is as follows. May be involved in transcriptional regulation. The chain is Zinc finger protein 689 (Znf689) from Rattus norvegicus (Rat).